The sequence spans 447 residues: ATP-dependent protease ATPase subunit HslU (447 aa).

Residues Ile17, 59–64 (GVGKTE), Asp256, Glu321, and Arg393 contribute to the ATP site.

This sequence belongs to the ClpX chaperone family. HslU subfamily. As to quaternary structure, a double ring-shaped homohexamer of HslV is capped on each side by a ring-shaped HslU homohexamer. The assembly of the HslU/HslV complex is dependent on binding of ATP.

It is found in the cytoplasm. In terms of biological role, ATPase subunit of a proteasome-like degradation complex; this subunit has chaperone activity. The binding of ATP and its subsequent hydrolysis by HslU are essential for unfolding of protein substrates subsequently hydrolyzed by HslV. HslU recognizes the N-terminal part of its protein substrates and unfolds these before they are guided to HslV for hydrolysis. The sequence is that of ATP-dependent protease ATPase subunit HslU from Stutzerimonas stutzeri (strain A1501) (Pseudomonas stutzeri).